A 200-amino-acid polypeptide reads, in one-letter code: Oligoribonuclease (200 aa).

The region spanning 20–183 (LVWLDMEMTG…ADIHESIDEL (164 aa)) is the Exonuclease domain. The active site involves Tyr-141.

The protein belongs to the oligoribonuclease family.

It is found in the cytoplasm. 3'-to-5' exoribonuclease specific for small oligoribonucleotides. In Burkholderia vietnamiensis (strain G4 / LMG 22486) (Burkholderia cepacia (strain R1808)), this protein is Oligoribonuclease.